A 121-amino-acid polypeptide reads, in one-letter code: MYILFTLVLTFVFCKPIHSLQCYNCSHSTMQCTTSTSCTSNLDSCLIAKAGSGVYYRCWKFDDCSFKRISNQLSETQLKYHCCKKNLCNVNKGIENIKRTISDKALLLLALFLVTAWNFPL.

A signal peptide spans 1–19 (MYILFTLVLTFVFCKPIHS). One can recognise a UPAR/Ly6 domain in the interval 20–104 (LQCYNCSHST…ENIKRTISDK (85 aa)). 5 disulfide bridges follow: Cys22/Cys45, Cys25/Cys32, Cys38/Cys58, Cys64/Cys82, and Cys83/Cys88. An N-linked (GlcNAc...) asparagine; by host glycan is attached at Asn24. Asn96 is lipidated: GPI-anchor amidated asparagine; by host. Residues 97–121 (IKRTISDKALLLLALFLVTAWNFPL) constitute a propeptide, removed in mature form.

It localises to the host cell membrane. The protein is Surface glycoprotein CD59 homolog (15) of Saimiriine herpesvirus 2 (strain 11) (SaHV-2).